A 131-amino-acid polypeptide reads, in one-letter code: Histone H2A.2 (131 aa).

Residues 1 to 22 (MSGGKGKAGSSEKASTSRSAKA) are disordered. Residue Ser-2 is modified to N-acetylserine. N6-acetyllysine is present on residues Lys-5 and Lys-7. Gln-105 carries the post-translational modification N5-methylglutamine. Phosphoserine is present on Ser-128. The [ST]-Q motif signature appears at 128–129 (SQ).

The protein belongs to the histone H2A family. In terms of assembly, the nucleosome is a histone octamer containing two molecules each of H2A, H2B, H3 and H4 assembled in one H3-H4 heterotetramer and two H2A-H2B heterodimers. The octamer wraps approximately 147 bp of DNA. Phosphorylated to form H2AS128ph (gamma-H2A) in response to DNA double-strand breaks (DSBs) generated by exogenous genotoxic agents and by stalled replication forks. Phosphorylation is dependent on the DNA damage checkpoint kinases MEC1/ATR and TEL1/ATM, spreads on either side of a detected DSB site and may mark the surrounding chromatin for recruitment of proteins required for DNA damage signaling and repair. Gamma-H2A is removed from the DNA prior to the strand invasion-primer extension step of the repair process and subsequently dephosphorylated. Dephosphorylation is necessary for efficient recovery from the DNA damage checkpoint. In terms of processing, acetylated by ESA1 to form H2AK4ac and H2AK7ac.

The protein localises to the nucleus. It localises to the chromosome. Its function is as follows. Core component of nucleosome which plays a central role in DNA double strand break (DSB) repair. Nucleosomes wrap and compact DNA into chromatin, limiting DNA accessibility to the cellular machineries which require DNA as a template. Histones thereby play a central role in transcription regulation, DNA repair, DNA replication and chromosomal stability. DNA accessibility is regulated via a complex set of post-translational modifications of histones, also called histone code, and nucleosome remodeling. This is Histone H2A.2 (HTA2) from Candida albicans (strain SC5314 / ATCC MYA-2876) (Yeast).